We begin with the raw amino-acid sequence, 477 residues long: UDP-N-acetylmuramate--L-alanine ligase (477 aa).

122–128 serves as a coordination point for ATP; that stretch reads GTHGKTT.

It belongs to the MurCDEF family.

Its subcellular location is the cytoplasm. The enzyme catalyses UDP-N-acetyl-alpha-D-muramate + L-alanine + ATP = UDP-N-acetyl-alpha-D-muramoyl-L-alanine + ADP + phosphate + H(+). It participates in cell wall biogenesis; peptidoglycan biosynthesis. Cell wall formation. The chain is UDP-N-acetylmuramate--L-alanine ligase from Xylella fastidiosa (strain 9a5c).